Consider the following 379-residue polypeptide: Gap junction alpha-1 protein (379 aa).

Residues 2-23 lie on the Cytoplasmic side of the membrane; that stretch reads GDWSALGRLLDKVQAYSTAGGK. A helical transmembrane segment spans residues 24 to 44; sequence VWLSVLFIFRILLLGTAVESA. The Extracellular portion of the chain corresponds to 45–76; the sequence is WGDEQSAFVCNTQQPGCENVCYDKSFPISHVR. 2 cysteine pairs are disulfide-bonded: Cys-54–Cys-192 and Cys-187–Cys-198. Residues 77 to 97 traverse the membrane as a helical segment; the sequence is FWVLQIIFVSTPTLLYLAHVF. Over 98 to 163 the chain is Cytoplasmic; that stretch reads YLMRKEEKLN…TYIISILFKS (66 aa). The chain crosses the membrane as a helical span at residues 164–184; the sequence is VFEVGFIIIQWYMYGFSLSAI. Over 185–207 the chain is Extracellular; that stretch reads YTCKRDPCPHQVDCFLSRPTEKT. The chain crosses the membrane as a helical span at residues 208-228; the sequence is IFIWFMLIVSIVSLALNIIEL. Residues 229–379 are Cytoplasmic-facing; sequence FYVTYKSIKD…SRPRPDDLEI (151 aa). The tract at residues 322-379 is disordered; the sequence is STISNTHAQPFDFSDEHQNTKKMAPGHEMQPLTILDQRPSSRASSHASSRPRPDDLEI. Low complexity predominate over residues 359–371; that stretch reads RPSSRASSHASSR.

Belongs to the connexin family. Alpha-type (group II) subfamily. In terms of assembly, a connexon is composed of a hexamer of connexins. Interacts with TMEM65. In terms of tissue distribution, expressed in most tissues. Highest levels found in eye and brain.

It localises to the cell membrane. The protein resides in the cell junction. It is found in the gap junction. Its function is as follows. One gap junction consists of a cluster of closely packed pairs of transmembrane channels, the connexons, through which materials of low MW diffuse from one cell to a neighboring cell. Plays an essential role in gap junction communication in the ventricles. The chain is Gap junction alpha-1 protein (gja1) from Xenopus laevis (African clawed frog).